Consider the following 347-residue polypeptide: S-adenosylmethionine:tRNA ribosyltransferase-isomerase (347 aa).

It belongs to the QueA family. In terms of assembly, monomer.

The protein localises to the cytoplasm. It carries out the reaction 7-aminomethyl-7-carbaguanosine(34) in tRNA + S-adenosyl-L-methionine = epoxyqueuosine(34) in tRNA + adenine + L-methionine + 2 H(+). It functions in the pathway tRNA modification; tRNA-queuosine biosynthesis. Its function is as follows. Transfers and isomerizes the ribose moiety from AdoMet to the 7-aminomethyl group of 7-deazaguanine (preQ1-tRNA) to give epoxyqueuosine (oQ-tRNA). In Pseudomonas aeruginosa (strain UCBPP-PA14), this protein is S-adenosylmethionine:tRNA ribosyltransferase-isomerase.